The following is a 165-amino-acid chain: MAATPAAIEVSLTIVFVLFFSADVSLTRNSEMKAHTSKMDSYSSSIYMNVLPTSLAQTSYHLAPISHLKCLSVQFSSHIHYSYYYGASVLERCVFHRSRIRGARFIVPIPFIAFPRHKNVFSQCTYFRRIPLGCLQRCSCSFWPRKSQNQICFEPSLRGHLIFVL.

The chain crosses the membrane as a helical span at residues 10-27 (VSLTIVFVLFFSADVSLT).

The protein localises to the membrane. This is an uncharacterized protein from Saccharomyces cerevisiae (strain ATCC 204508 / S288c) (Baker's yeast).